The sequence spans 333 residues: tRNA N6-adenosine threonylcarbamoyltransferase (333 aa).

Fe cation contacts are provided by His-118 and His-122. Substrate contacts are provided by residues Val-140–Gly-144, Asp-173, Gly-186, and Asn-274. Residue Asp-298 participates in Fe cation binding.

It belongs to the KAE1 / TsaD family. It depends on Fe(2+) as a cofactor.

It localises to the cytoplasm. It carries out the reaction L-threonylcarbamoyladenylate + adenosine(37) in tRNA = N(6)-L-threonylcarbamoyladenosine(37) in tRNA + AMP + H(+). Required for the formation of a threonylcarbamoyl group on adenosine at position 37 (t(6)A37) in tRNAs that read codons beginning with adenine. Is involved in the transfer of the threonylcarbamoyl moiety of threonylcarbamoyl-AMP (TC-AMP) to the N6 group of A37, together with TsaE and TsaB. TsaD likely plays a direct catalytic role in this reaction. The sequence is that of tRNA N6-adenosine threonylcarbamoyltransferase from Deinococcus geothermalis (strain DSM 11300 / CIP 105573 / AG-3a).